A 623-amino-acid polypeptide reads, in one-letter code: Pentatricopeptide repeat-containing protein At5g15340, mitochondrial (623 aa).

The N-terminal 16 residues, 1-16 (MKCLSYQKVRLLLRHC), are a transit peptide targeting the mitochondrion. PPR repeat units follow at residues 42 to 72 (RSYL…IPLS), 75 to 109 (DNVD…RVEI), 110 to 144 (DDVS…GVLT), 145 to 179 (SVKV…SVVS), 180 to 206 (WTVV…MPER), 207 to 237 (NAVA…MVFR), 243 to 277 (NFVT…EMMM), 285 to 319 (DVMV…NVVT), 320 to 346 (WNAL…MIRE), 350 to 384 (DDLT…GLEP), and 385 to 419 (KVDH…PNEV). The segment at 420–495 (VLGSLLGSCS…IPGLSSIYVN (76 aa)) is type E motif. A type E(+) motif region spans residues 496 to 526 (DSVHRFSSGDRSHPRTKEIYLKLNEVIERIR). Positions 527–623 (SAGYVPDVSG…GGSCSCSDYW (97 aa)) are type DYW motif.

This sequence belongs to the PPR family. PCMP-H subfamily.

Its subcellular location is the mitochondrion. The sequence is that of Pentatricopeptide repeat-containing protein At5g15340, mitochondrial (PCMP-H91) from Arabidopsis thaliana (Mouse-ear cress).